A 711-amino-acid chain; its full sequence is C6 finger domain transcription factor nscR (711 aa).

Residues 17 to 43 constitute a DNA-binding region (zn(2)-C6 fungal-type); it reads CELCRERKVKCDKLDPCTNCSSAGVIC. The interval 372-394 is disordered; it reads SPPKHINDSDFDPTTSHDVPDRE.

The protein localises to the nucleus. Functionally, transcription factor that specifically regulates the neosartoricin B biosynthesis gene cluster. This Trichophyton tonsurans (strain CBS 112818) (Scalp ringworm fungus) protein is C6 finger domain transcription factor nscR.